The following is a 209-amino-acid chain: Peptide deformylase 2 (209 aa).

2 residues coordinate Fe cation: Cys-101 and His-149. Glu-150 is an active-site residue. His-153 serves as a coordination point for Fe cation.

It belongs to the polypeptide deformylase family. The cofactor is Fe(2+).

The catalysed reaction is N-terminal N-formyl-L-methionyl-[peptide] + H2O = N-terminal L-methionyl-[peptide] + formate. Functionally, removes the formyl group from the N-terminal Met of newly synthesized proteins. Requires at least a dipeptide for an efficient rate of reaction. N-terminal L-methionine is a prerequisite for activity but the enzyme has broad specificity at other positions. In Coxiella burnetii (strain RSA 493 / Nine Mile phase I), this protein is Peptide deformylase 2.